We begin with the raw amino-acid sequence, 611 residues long: Protein KINASE OF THE OUTER CHLOROPLAST MEMBRANE 1 (611 aa).

At 1–555 (MASKIIAGKP…LEDFHWAVRP (555 aa)) the chain is on the cytoplasmic side. The Protein kinase domain maps to 39 to 306 (LKLRHRIGRG…TDILLVLKSL (268 aa)). Residues 45 to 53 (IGRGPFGDV) and Lys74 each bind ATP. The helical transmembrane segment at 556-572 (LLIAMGLLTAMKLGICV) threads the bilayer. The Chloroplast intermembrane segment spans residues 573-611 (RKKIGRSKDGKQRDGSTGQGDCKIPDGKGSDKSKWLVFF). Residues 579–606 (SKDGKQRDGSTGQGDCKIPDGKGSDKSK) are disordered. Over residues 595–606 (KIPDGKGSDKSK) the composition is skewed to basic and acidic residues.

Belongs to the protein kinase superfamily. Ser/Thr protein kinase family. In terms of assembly, associates with the TOC complex containing, at least, translocons at the chloroplast envelope (e.g. TOCs and TICs such as TOC159, TOC75, TOC33 and TIC56).

Its subcellular location is the plastid. It localises to the chloroplast outer membrane. It catalyses the reaction L-seryl-[protein] + ATP = O-phospho-L-seryl-[protein] + ADP + H(+). The catalysed reaction is L-threonyl-[protein] + ATP = O-phospho-L-threonyl-[protein] + ADP + H(+). Its function is as follows. Serine/threonine protein kinase acting as a regulatory component of the plastid protein import machinery by phosphorylating import receptors (e.g. the A-domain of TOC159, TOC120 and TOC132). Supports preprotein import and contributes to efficient chloroplast biogenesis, thus being required for survival during de-etiolation. The protein is Protein KINASE OF THE OUTER CHLOROPLAST MEMBRANE 1 of Arabidopsis thaliana (Mouse-ear cress).